Consider the following 104-residue polypeptide: MAGRSGVNDEELLRAVRVIKILYQSNPYPNSKGTRQARRNRRRRWRARQRQIRAISERILSSCLGGPPEPVDLPLPPLDRLTLDTEEDSGTPGTESQQGTATTE.

At Ser-5 the chain carries Phosphoserine; by host CK2. Residues Val-18 to Asn-26 are homomultimerization. Over residues Ser-25–Thr-34 the composition is skewed to polar residues. Disordered stretches follow at residues Ser-25–Arg-48 and Cys-63–Glu-104. The Nuclear localization signal and RNA-binding (RRE) motif lies at Thr-34–Arg-50. Positions Arg-35–Arg-48 are enriched in basic residues. The segment covering Pro-67 to Pro-77 has biased composition (pro residues). The Nuclear export signal and binding to XPO1 motif lies at Leu-73–Asp-84. Residues Thr-91–Glu-104 are compositionally biased toward polar residues.

The protein belongs to the HIV-1 REV protein family. As to quaternary structure, homomultimer; when bound to the RRE. Multimeric assembly is essential for activity and may involve XPO1. Binds to human KPNB1, XPO1, TNPO1, RANBP5 and IPO7. Interacts with the viral Integrase. Interacts with human KHDRBS1. Interacts with human NAP1; this interaction decreases Rev multimerization and stimulates its activity. Interacts with human DEAD-box helicases DDX3 and DDX24; these interactions may serve for viral RNA export to the cytoplasm and packaging, respectively. Interacts with human PSIP1; this interaction may inhibit HIV-1 DNA integration by promoting dissociation of the Integrase-LEDGF/p75 complex. In terms of processing, asymmetrically arginine dimethylated at one site by host PRMT6. Methylation impairs the RNA-binding activity and export of viral RNA from the nucleus to the cytoplasm. Phosphorylated by protein kinase CK2. Presence of, and maybe binding to the N-terminus of the regulatory beta subunit of CK2 is necessary for CK2-mediated Rev's phosphorylation.

Its subcellular location is the host nucleus. The protein resides in the host nucleolus. It localises to the host cytoplasm. In terms of biological role, escorts unspliced or incompletely spliced viral pre-mRNAs (late transcripts) out of the nucleus of infected cells. These pre-mRNAs carry a recognition sequence called Rev responsive element (RRE) located in the env gene, that is not present in fully spliced viral mRNAs (early transcripts). This function is essential since most viral proteins are translated from unspliced or partially spliced pre-mRNAs which cannot exit the nucleus by the pathway used by fully processed cellular mRNAs. Rev itself is translated from a fully spliced mRNA that readily exits the nucleus. Rev's nuclear localization signal (NLS) binds directly to KPNB1/Importin beta-1 without previous binding to KPNA1/Importin alpha-1. KPNB1 binds to the GDP bound form of RAN (Ran-GDP) and targets Rev to the nucleus. In the nucleus, the conversion from Ran-GDP to Ran-GTP dissociates Rev from KPNB1 and allows Rev's binding to the RRE in viral pre-mRNAs. Rev multimerization on the RRE via cooperative assembly exposes its nuclear export signal (NES) to the surface. Rev can then form a complex with XPO1/CRM1 and Ran-GTP, leading to nuclear export of the complex. Conversion from Ran-GTP to Ran-GDP mediates dissociation of the Rev/RRE/XPO1/RAN complex, so that Rev can return to the nucleus for a subsequent round of export. Beside KPNB1, also seems to interact with TNPO1/Transportin-1, RANBP5/IPO5 and IPO7/RANBP7 for nuclear import. The nucleoporin-like HRB/RIP is an essential cofactor that probably indirectly interacts with Rev to release HIV RNAs from the perinuclear region to the cytoplasm. This Human immunodeficiency virus type 1 group N (isolate YBF30) (HIV-1) protein is Protein Rev.